The sequence spans 396 residues: MTPISERPIRIGIVAGEASGDLLGAGLMQEIKALYPQATFEGIGGERMLKEGFNTFFQMERLSIMGLVEVLGRLPELLAMRRRIVDHFTATPPDLFLGIDSPDFTIGIELKLRQAGIKTAHYVSPSVWAWRQNRVFKIAKAVDLMLTLLPFEARFYREHNVPVKFVGHPLAEIIPLHPDKVAMRHELGIDASGEVIAVLPGSRGGEVSRLGPTFIETIAWLHQRRPDVRFVIPAANQARKTQIEQQLQSHGGRLPVTLIDQHSRECMMAADAILLASGTATLEAMLVKRPMVVAYKLATLSYWIMRRLLKAKYISLPNLLADKALVPELIQNDATPAKLGEALLKELNVERRRSLEDEFEGLHKLIRQNASVAAAQAVAELIEKGRVATHDAREGH.

This sequence belongs to the LpxB family.

The catalysed reaction is a lipid X + a UDP-2-N,3-O-bis[(3R)-3-hydroxyacyl]-alpha-D-glucosamine = a lipid A disaccharide + UDP + H(+). The protein operates within bacterial outer membrane biogenesis; LPS lipid A biosynthesis. Functionally, condensation of UDP-2,3-diacylglucosamine and 2,3-diacylglucosamine-1-phosphate to form lipid A disaccharide, a precursor of lipid A, a phosphorylated glycolipid that anchors the lipopolysaccharide to the outer membrane of the cell. This is Lipid-A-disaccharide synthase from Hahella chejuensis (strain KCTC 2396).